A 1403-amino-acid chain; its full sequence is Sushi, nidogen and EGF-like domain-containing protein 1 (1403 aa).

The N-terminal stretch at 1–24 (MRLGAAWALLLAAALGLGTRGVRA) is a signal peptide. The region spanning 103 to 258 (AFWADVDNRR…GRWAFRIDDA (156 aa)) is the NIDO domain. 3 EGF-like domains span residues 268 to 309 (TTSV…RRCH), 311 to 347 (DVNECASHPCQNGGTCTHGVNSFSCQCPAGFKGPTCE), and 349 to 385 (AQSPCDNKVCQNGGQCQAESSSAVCVCQAGYTGATCE). Cystine bridges form between Cys272/Cys284, Cys278/Cys297, Cys299/Cys308, Cys315/Cys326, Cys320/Cys335, Cys337/Cys346, Cys353/Cys364, Cys358/Cys373, Cys375/Cys384, Cys391/Cys402, Cys396/Cys411, Cys413/Cys422, Cys433/Cys444, Cys438/Cys453, Cys455/Cys464, Cys472/Cys480, Cys474/Cys488, and Cys490/Cys499. Residue Asn292 is glycosylated (N-linked (GlcNAc...) asparagine). One can recognise an EGF-like 4; calcium-binding domain in the interval 387–423 (DVDECSSDPCQNGGSCVDLVGNYSCICVEPFEGPQCE). An N-linked (GlcNAc...) asparagine glycan is attached at Asn408. EGF-like domains lie at 429 to 465 (VPSPCLSNPCQNGGTCVDADEGYVCECPEGFMGLDCR) and 468 to 500 (ILNDCDCRNGGRCLGANTTLCQCPPGFFGLLCE). Asn484 carries an N-linked (GlcNAc...) asparagine glycan. Asn536 carries an N-linked (GlcNAc...) asparagine glycan. 4 EGF-like domains span residues 541–577 (LPSPCDSDPCFNGGSCDAHEDSYTCECPRGFHGRHCE), 580–616 (RPHLCSSGPCRNGGTCKEMGDEYRCTCPYRFTGRHCE), 619–655 (KPDSCASGPCHNGGTCFHYIGKYKCDCPPGFSGRHCE), and 657–693 (APSPCFRSPCMNGGTCEDLGTDFSCYCQPGYTGHRCQ). Intrachain disulfides connect Cys545-Cys556, Cys550-Cys565, Cys567-Cys576, Cys584-Cys595, Cys589-Cys604, Cys606-Cys615, Cys623-Cys634, Cys628-Cys643, Cys645-Cys654, Cys661-Cys672, Cys666-Cys681, Cys683-Cys692, Cys698-Cys739, Cys724-Cys751, Cys757-Cys768, Cys762-Cys777, Cys779-Cys788, Cys795-Cys806, Cys800-Cys815, Cys817-Cys826, Cys833-Cys844, Cys838-Cys853, Cys855-Cys864, Cys871-Cys882, Cys876-Cys891, and Cys893-Cys902. A Sushi domain is found at 696–753 (VDCGHPEEVEHATMRFNGTHVGSVALYTCEPGFSLSALSHIRVCQPQGVWSQPPQCIE). Asn712 carries an N-linked (GlcNAc...) asparagine glycan. Positions 753–789 (EVDECRSQPCLHGGSCQDLIADYQCLCSPGYEGVHCE) constitute an EGF-like 11; calcium-binding domain. The EGF-like 12; calcium-binding domain occupies 791–827 (ETDECQAQPCRNGGSCRDLPRAFICQCPEGFVGIHCE). 2 EGF-like domains span residues 829 to 865 (EVDACASSPCQHGGRCEDGGGAYLCVCPEGFFGYNCE) and 867 to 903 (VSDPCFSSPCGSRGYCLASNGSHSCTCKVGYTGKDCT). Asn886 carries N-linked (GlcNAc...) asparagine glycosylation. Fibronectin type-III domains lie at 908 to 1006 (PPTA…TRPR), 1007 to 1105 (PIED…TRPL), and 1106 to 1200 (PPAN…SPRD). Asn977, Asn1015, Asn1109, Asn1139, and Asn1298 each carry an N-linked (GlcNAc...) asparagine glycan. The EGF-like 15 domain maps to 1306 to 1342 (TPGSCSEDACQNGGTCVPGADAHSCDCRPGFKGRHCE). Intrachain disulfides connect Cys1310-Cys1321, Cys1315-Cys1330, and Cys1332-Cys1341.

Post-translationally, phosphorylated on serine and threonine residues. N-glycosylated. As to expression, expressed in lung.

The protein resides in the secreted. The protein localises to the extracellular space. It localises to the extracellular matrix. In Mus musculus (Mouse), this protein is Sushi, nidogen and EGF-like domain-containing protein 1.